The sequence spans 588 residues: Juvenile hormone esterase (588 aa).

Positions 1–23 (MKFPKNLFLVLFYTSWKFCDVCA) are cleaved as a signal peptide. Asn79 and Asn83 each carry an N-linked (GlcNAc...) asparagine glycan. Cys91 and Cys109 are joined by a disulfide. Ser214 acts as the Acyl-ester intermediate in catalysis. An N-linked (GlcNAc...) asparagine glycan is attached at Asn257. Cysteines 268 and 281 form a disulfide. Catalysis depends on Glu350, which acts as the Charge relay system. N-linked (GlcNAc...) asparagine glycans are attached at residues Asn389, Asn396, and Asn472. The active-site Charge relay system is His479.

It belongs to the type-B carboxylesterase/lipase family.

The protein localises to the secreted. The enzyme catalyses juvenile hormone III + H2O = juvenile hormone III carboxylate + methanol + H(+). Inhibited by 3-octylthio-1,1,1-trifluoro-2-propanone (OTFP), a specific inhibitor of juvenile hormone esterase (JHE), but not by diisopropyl fluorophosphate (DFP), a serine enzyme inhibitor. In terms of biological role, may function as a juvenile hormone (JH)-specific degradation enzyme in vivo decreasing JH activity. Hydrolyzes JH III in vitro. Hydrolyzes effectively also methyl hepthylthioacetothioate (HEPTAT), a synthetic substrate. Of the general esterase substrates, it has preference for 2-naphthyl acetate (2-NA) and shows a weak activity for 1-NA and 4-nitrophenylacetate (4-NPA). This Tribolium castaneum (Red flour beetle) protein is Juvenile hormone esterase.